A 186-amino-acid polypeptide reads, in one-letter code: Putative manganese efflux pump MntP (186 aa).

The next 6 helical transmembrane spans lie at 1-21, 41-61, 62-82, 105-127, 139-159, and 163-183; these read MSFL…FAVS, VFFG…GSAV, SGFV…FIGG, LFLL…AFLG, CVTF…GHFF, and VEIL…AEHM.

It belongs to the MntP (TC 9.B.29) family.

The protein resides in the cell membrane. Functionally, probably functions as a manganese efflux pump. This chain is Putative manganese efflux pump MntP, found in Methanosarcina mazei (strain ATCC BAA-159 / DSM 3647 / Goe1 / Go1 / JCM 11833 / OCM 88) (Methanosarcina frisia).